The following is a 33-amino-acid chain: Cytochrome b6-f complex subunit 8 (33 aa).

A helical membrane pass occupies residues 2–22 (LFTLGWASLAAMFSFSIAMVV).

Belongs to the PetN family. As to quaternary structure, the 4 large subunits of the cytochrome b6-f complex are cytochrome b6, subunit IV (17 kDa polypeptide, PetD), cytochrome f and the Rieske protein, while the 4 small subunits are PetG, PetL, PetM and PetN. The complex functions as a dimer.

It is found in the cellular thylakoid membrane. Component of the cytochrome b6-f complex, which mediates electron transfer between photosystem II (PSII) and photosystem I (PSI), cyclic electron flow around PSI, and state transitions. This Synechococcus sp. (strain CC9605) protein is Cytochrome b6-f complex subunit 8.